The sequence spans 312 residues: Olfactory receptor 4F15 (312 aa).

The Extracellular segment spans residues 1-25 (MNGMNHSVVSEFVFMGLTNSREIQL). The N-linked (GlcNAc...) asparagine glycan is linked to N5. Residues 26–49 (LLFVFSLLFYFASMMGNLVIVFTV) form a helical membrane-spanning segment. At 50–57 (TMDAHLHS) the chain is on the cytoplasmic side. Residues 58–79 (PMYFLLANLSIIDMAFCSITAP) traverse the membrane as a helical segment. Residues 80-100 (KMICDIFKKHKAISFRGCITQ) lie on the Extracellular side of the membrane. C97 and C189 form a disulfide bridge. Residues 101–120 (IFFSHALGGTEMVLLIAMAF) traverse the membrane as a helical segment. The Cytoplasmic portion of the chain corresponds to 121-139 (DRYMAICKPLHYLTIMSPR). The chain crosses the membrane as a helical span at residues 140-158 (MCLYFLATSSIIGLIHSLV). Over 159–195 (QLVFVVDLPFCGPNIFDSFYCDLPRLLRLACTNTQEL) the chain is Extracellular. Residues 196-219 (EFMVTVNSGLISVGSFVLLVISYI) form a helical membrane-spanning segment. The Cytoplasmic portion of the chain corresponds to 220 to 235 (FILFTVWKHSSGGLAK). Residues 236-258 (ALSTLSAHVTVVILFFGPLMFFY) form a helical membrane-spanning segment. Residues 259–269 (TWPSPTSHLDK) lie on the Extracellular side of the membrane. Residues 270–289 (YLAIFDAFITPFLNPVIYTF) traverse the membrane as a helical segment. The Cytoplasmic portion of the chain corresponds to 290–312 (RNKDMKVAMRRLCSRLAHFTKIL).

It belongs to the G-protein coupled receptor 1 family.

It localises to the cell membrane. Odorant receptor. The protein is Olfactory receptor 4F15 (OR4F15) of Homo sapiens (Human).